Here is a 267-residue protein sequence, read N- to C-terminus: Tryptophan synthase alpha chain (267 aa).

Active-site proton acceptor residues include Glu49 and Asp60.

It belongs to the TrpA family. As to quaternary structure, tetramer of two alpha and two beta chains.

It catalyses the reaction (1S,2R)-1-C-(indol-3-yl)glycerol 3-phosphate + L-serine = D-glyceraldehyde 3-phosphate + L-tryptophan + H2O. Its pathway is amino-acid biosynthesis; L-tryptophan biosynthesis; L-tryptophan from chorismate: step 5/5. The alpha subunit is responsible for the aldol cleavage of indoleglycerol phosphate to indole and glyceraldehyde 3-phosphate. The polypeptide is Tryptophan synthase alpha chain (Chloroflexus aggregans (strain MD-66 / DSM 9485)).